We begin with the raw amino-acid sequence, 662 residues long: Intracellular exo-alpha-(1-&gt;5)-L-arabinofuranosidase (662 aa).

Alpha-L-arabinofuranose-binding residues include Glu27, Asn72, and Asn174. Glu175 functions as the Proton donor/acceptor in the catalytic mechanism. Residues Tyr246, Glu294, and Gln352 each coordinate alpha-L-arabinofuranose. The active-site Nucleophile is the Glu294. 3 disordered regions span residues 454 to 483, 497 to 548, and 588 to 662; these read LADA…SLRD, SIRC…RTAR, and WTRW…ARRC. Positions 519 to 533 are enriched in low complexity; sequence TGTPPAAPPSSSSAP. The span at 537–547 shows a compositional bias: basic and acidic residues; it reads PTARRSPDRTA. 3 stretches are compositionally biased toward low complexity: residues 590–603, 628–641, and 649–662; these read RWAP…PSRR, RRSP…TPAP, and AGAS…ARRC.

This sequence belongs to the glycosyl hydrolase 51 family. Homohexamer; trimer of dimers.

It is found in the cytoplasm. The enzyme catalyses Hydrolysis of terminal non-reducing alpha-L-arabinofuranoside residues in alpha-L-arabinosides.. It participates in glycan metabolism; L-arabinan degradation. Its function is as follows. Involved in the degradation of arabinan and is a key enzyme in the complete degradation of the plant cell wall. Catalyzes the cleavage of terminal alpha-(1-&gt;5)-arabinofuranosyl bonds in different hemicellulosic homopolysaccharides (arabino-oligoxylosides, branched and debranched arabinans). It acts rapidly on the short-chain arabino-oligoxylosides from digestion of xylan with xylanases. It hydrolyzes slowly arabinan and arabinoxylan from wheat and rye flour. This Streptomyces lividans protein is Intracellular exo-alpha-(1-&gt;5)-L-arabinofuranosidase.